The chain runs to 275 residues: Calcyphosin (275 aa).

Residues 59-87 (PGTTQLTQGPAGRTLGQTQASCPEPRPSM) are disordered. EF-hand domains lie at 107-142 (SGIQ…LGLV), 143-178 (LDQA…PMSQ), 179-214 (AREA…RAHP), and 222-258 (TEDE…VSAS). Positions 120, 122, 124, 126, 131, 156, 158, 160, 162, 167, 192, 194, 196, and 203 each coordinate Ca(2+). At serine 126 the chain carries Phosphoserine; by PKA.

Monomer. Does not form oligomers in the presence of calcium.

It is found in the cytoplasm. Functionally, calcium-binding protein. May play a role in cellular signaling events (Potential). The sequence is that of Calcyphosin from Homo sapiens (Human).